A 573-amino-acid chain; its full sequence is 2-succinyl-5-enolpyruvyl-6-hydroxy-3-cyclohexene-1-carboxylate synthase (573 aa).

This sequence belongs to the TPP enzyme family. MenD subfamily. In terms of assembly, homodimer. Mg(2+) is required as a cofactor. The cofactor is Mn(2+). It depends on thiamine diphosphate as a cofactor.

It catalyses the reaction isochorismate + 2-oxoglutarate + H(+) = 5-enolpyruvoyl-6-hydroxy-2-succinyl-cyclohex-3-ene-1-carboxylate + CO2. It participates in quinol/quinone metabolism; 1,4-dihydroxy-2-naphthoate biosynthesis; 1,4-dihydroxy-2-naphthoate from chorismate: step 2/7. Its pathway is quinol/quinone metabolism; menaquinone biosynthesis. Its function is as follows. Catalyzes the thiamine diphosphate-dependent decarboxylation of 2-oxoglutarate and the subsequent addition of the resulting succinic semialdehyde-thiamine pyrophosphate anion to isochorismate to yield 2-succinyl-5-enolpyruvyl-6-hydroxy-3-cyclohexene-1-carboxylate (SEPHCHC). The protein is 2-succinyl-5-enolpyruvyl-6-hydroxy-3-cyclohexene-1-carboxylate synthase of Shewanella sp. (strain MR-4).